A 376-amino-acid polypeptide reads, in one-letter code: UDP-N-acetylglucosamine--N-acetylmuramyl-(pentapeptide) pyrophosphoryl-undecaprenol N-acetylglucosamine transferase (376 aa).

UDP-N-acetyl-alpha-D-glucosamine-binding positions include 12–14 (TGG), Asn125, Arg165, Ser197, and Gln296.

It belongs to the glycosyltransferase 28 family. MurG subfamily.

The protein localises to the cell inner membrane. The enzyme catalyses di-trans,octa-cis-undecaprenyl diphospho-N-acetyl-alpha-D-muramoyl-L-alanyl-D-glutamyl-meso-2,6-diaminopimeloyl-D-alanyl-D-alanine + UDP-N-acetyl-alpha-D-glucosamine = di-trans,octa-cis-undecaprenyl diphospho-[N-acetyl-alpha-D-glucosaminyl-(1-&gt;4)]-N-acetyl-alpha-D-muramoyl-L-alanyl-D-glutamyl-meso-2,6-diaminopimeloyl-D-alanyl-D-alanine + UDP + H(+). Its pathway is cell wall biogenesis; peptidoglycan biosynthesis. Cell wall formation. Catalyzes the transfer of a GlcNAc subunit on undecaprenyl-pyrophosphoryl-MurNAc-pentapeptide (lipid intermediate I) to form undecaprenyl-pyrophosphoryl-MurNAc-(pentapeptide)GlcNAc (lipid intermediate II). In Protochlamydia amoebophila (strain UWE25), this protein is UDP-N-acetylglucosamine--N-acetylmuramyl-(pentapeptide) pyrophosphoryl-undecaprenol N-acetylglucosamine transferase.